A 30-amino-acid polypeptide reads, in one-letter code: Trypsin inhibitor 2 (30 aa).

3 disulfide bridges follow: C2-C19, C9-C21, and C15-C27.

Belongs to the protease inhibitor I7 (squash-type serine protease inhibitor) family.

The protein localises to the secreted. Inhibits trypsin. The sequence is that of Trypsin inhibitor 2 from Ecballium elaterium (Squirting cucumber).